Reading from the N-terminus, the 250-residue chain is MHITANSLFRDTIHFLRSKWPIIVTFVLLSSTITVVIDSIITPNARSLLAFYQLDIKKYHSLLDFVRTLTIDQQKLLLYASIAKSFSLLIGSTFLLGNLITFIQMTSYKKNITLSIFNNIPYKTFFKLLQLIFTTTIITQLGFLLYFIPGFTTIILFSLSPIILLIEEKTILNSIYASINITLSNFKIIVPAIIFWLCFKIFIILIISYFKFFSDFLAYFILNLCINFISSILIIYLFRCYMILPKFLKN.

The next 6 membrane-spanning stretches (helical) occupy residues 21 to 41 (PIIVTFVLLSSTITVVIDSII), 86 to 106 (FSLLIGSTFLLGNLITFIQMT), 125 to 145 (FFKLLQLIFTTTIITQLGFLL), 146 to 166 (YFIPGFTTIILFSLSPIILLI), 188 to 208 (IIVPAIIFWLCFKIFIILIIS), and 216 to 236 (FLAYFILNLCINFISSILIIY).

Belongs to the UPF0259 family.

The protein localises to the cell membrane. The sequence is that of UPF0259 membrane protein bbp_256 from Buchnera aphidicola subsp. Baizongia pistaciae (strain Bp).